The primary structure comprises 60 residues: Phospholipase A2 (60 aa).

Positions 27, 29, and 31 each coordinate Ca(2+). Cysteine 28 and cysteine 44 are disulfide-bonded. Histidine 47 is a catalytic residue. Residue aspartate 48 coordinates Ca(2+).

It depends on Ca(2+) as a cofactor. Expressed by the venom gland.

The protein resides in the secreted. It carries out the reaction a 1,2-diacyl-sn-glycero-3-phosphocholine + H2O = a 1-acyl-sn-glycero-3-phosphocholine + a fatty acid + H(+). In terms of biological role, snake venom phospholipase A2 (PLA2) that displays mild but significant inhibition of mouse platelet aggregation induced by ADP and collagen. In vivo, induces edema in the foot pads and gastrocnemius muscles of mice but shows no myonecrotic or myotoxic activity. PA2 catalyzes the calcium-dependent hydrolysis of the 2-acyl groups in 3-sn-phosphoglycerides. This Lachesis muta rhombeata (Bushmaster) protein is Phospholipase A2.